The chain runs to 280 residues: Pyrethroid hydrolase (280 aa).

Catalysis depends on charge relay system residues Asp-202 and His-230. Residues 254 to 280 (YRQTATKAGPDRPAGADGGRADRADLP) are disordered.

Belongs to the AB hydrolase superfamily. In terms of assembly, monomer.

The enzyme catalyses (-)-trans-permethrin + H2O = (3-phenoxyphenyl)methanol + (1S,3R)-3-(2,2-dichlorovinyl)-2,2-dimethylcyclopropanecarboxylate + H(+). Catalyzes the hydrolysis of pyrethroids pesticides. Catalyzes the hydrolysis of cypermethrin to equimolar amounts of cyano-3-phenoxybenzyl alcohol and 2,2-dimethyl-3-(2,2-dichlorovinyl)-cyclopropanecarboxylic acid. Hydrolyzes cis-permethrin at approximately equal rate to trans-permethrin. In Sphingobium wenxiniae (strain DSM 21828 / CGMCC 1.7748 / JZ-1), this protein is Pyrethroid hydrolase (pytH).